We begin with the raw amino-acid sequence, 366 residues long: MTDQTGKRALLPLLGIDKPIIQAPMAGVSTPALAAAVCNAGGLGSLGVGAMNADGARKVIRETRALTDKPFNINVFCHRPAQADAAVEQQWLSWLAPHFEKYGATPPAKLSDIYTSFLADPAMLAVFLEEKPAIVSFHFGLPSADVIAELKKAGIRLLASATNLQEAAQVEAAGVDAIVAQGIEAGGHRGVFDPDAFDDRLGTFALTRLLAKECRLPVIAAGGIMDGAGIAAALALGAQAAQLGTAFVACTETSIDEGYRRALLGEAARRTTFTAAISGRLARSMANSFTALGADPRSPEPATYPIAYDAGKALNAAAKAKGEFGYGAHWAGQAAALARSLPAAELVAQLERELKQSIEQLRQFAN.

FMN is bound by residues Asn74, Gln181, Gly186, Gly223, and 242–245; that span reads QLGT.

This sequence belongs to the nitronate monooxygenase family. NMO class I subfamily. The cofactor is FMN.

The catalysed reaction is 3 propionate 3-nitronate + 3 O2 + H2O = 3 3-oxopropanoate + 2 nitrate + nitrite + H2O2 + 3 H(+). Its function is as follows. Nitronate monooxygenase that uses molecular oxygen to catalyze the oxidative denitrification of alkyl nitronates. Acts on propionate 3-nitronate (P3N), the presumed physiological substrate. Is likely involved in the degradation of P3N, that allows B.phytofirmans PsJN to grow on 3-nitropropionate/P3N as the sole source of nitrogen and carbon. Also probably functions in the detoxification of P3N, a metabolic poison produced by plants and fungi as a defense mechanism. Cannot oxidize nitroalkanes such as 3-nitropropionate, nitroethane, or 1-nitropropane. In Paraburkholderia phytofirmans (strain DSM 17436 / LMG 22146 / PsJN) (Burkholderia phytofirmans), this protein is Nitronate monooxygenase.